We begin with the raw amino-acid sequence, 287 residues long: Putative inactive carboxylesterase 4 (287 aa).

Residues 1-18 (MWLPALVLATLAASAAWA) form the signal peptide. A glycan (N-linked (GlcNAc...) asparagine) is linked at asparagine 80.

The protein belongs to the type-B carboxylesterase/lipase family. As to expression, expressed in placenta.

It localises to the secreted. Functionally, has no esterase activity. This Homo sapiens (Human) protein is Putative inactive carboxylesterase 4 (CES1P1).